Reading from the N-terminus, the 137-residue chain is TINYNPQRTRFRKQHRGRMKGISYRGNNICFGRYALQALEPAWITSRQIEAGRRAMSRNVRRGGQIWVRIFPDKPVTVRPTETRMGSGKGFPEYWVAVVKPGKILYEMGGVPENIARKAISIASSKMPIRTQFIISG.

This sequence belongs to the universal ribosomal protein uL16 family. In terms of assembly, part of the 50S ribosomal subunit.

The protein localises to the plastid. Its subcellular location is the chloroplast. This Vigna unguiculata (Cowpea) protein is Large ribosomal subunit protein uL16c.